Reading from the N-terminus, the 479-residue chain is ESX-1 secretion system ATPase EccB1 (479 aa).

The Cytoplasmic segment spans residues 1-44; that stretch reads MAGFRLTTKVQVSGWRFLLRRVEHAIVRRDTRMFDDPLQFYSRA. The chain crosses the membrane as a helical span at residues 45–65; the sequence is VFAGVVVSVLICLGAALMAYF. Topologically, residues 66-479 are periplasmic; that stretch reads KPLGKQGSDQ…NPRKVASGEG (414 aa). Cysteine 152 and cysteine 347 are joined by a disulfide.

The protein belongs to the EccB family. Part of the ESX-1 / type VII secretion system (T7SS), which is composed of cytosolic and membrane components. The ESX-1 membrane complex is composed of EccB1, EccCa1, EccCb1, EccD1 and EccE1.

Its subcellular location is the cell inner membrane. In terms of biological role, an ATPase. Part of the ESX-1 / type VII specialized secretion system (T7SS), which exports several proteins including EsxA and EsxB. Plays a role in DNA conjugation, in both donor and recipient strains. This chain is ESX-1 secretion system ATPase EccB1, found in Mycolicibacterium smegmatis (strain MKD8) (Mycobacterium smegmatis).